A 206-amino-acid polypeptide reads, in one-letter code: Small ribosomal subunit protein uS4 (206 aa).

The region spanning 96-156 (GRLDNVVYRM…EKAKNQLRVK (61 aa)) is the S4 RNA-binding domain.

This sequence belongs to the universal ribosomal protein uS4 family. Part of the 30S ribosomal subunit. Contacts protein S5. The interaction surface between S4 and S5 is involved in control of translational fidelity.

Functionally, one of the primary rRNA binding proteins, it binds directly to 16S rRNA where it nucleates assembly of the body of the 30S subunit. In terms of biological role, with S5 and S12 plays an important role in translational accuracy. This is Small ribosomal subunit protein uS4 from Marinobacter nauticus (strain ATCC 700491 / DSM 11845 / VT8) (Marinobacter aquaeolei).